A 305-amino-acid chain; its full sequence is NAD kinase 2 (305 aa).

D78 acts as the Proton acceptor in catalysis. NAD(+) is bound by residues 78–79 (DG), 152–153 (NE), D182, 193–198 (TAYSLS), and N251.

Belongs to the NAD kinase family. The cofactor is a divalent metal cation.

The protein resides in the cytoplasm. It carries out the reaction NAD(+) + ATP = ADP + NADP(+) + H(+). Its function is as follows. Involved in the regulation of the intracellular balance of NAD and NADP, and is a key enzyme in the biosynthesis of NADP. Catalyzes specifically the phosphorylation on 2'-hydroxyl of the adenosine moiety of NAD to yield NADP. This chain is NAD kinase 2, found in Trichormus variabilis (strain ATCC 29413 / PCC 7937) (Anabaena variabilis).